A 315-amino-acid chain; its full sequence is MTIDSGFNHITVLLDEAVEALALRADGCYLDGTFGRGGHSRLILSKLGPQGRLLGFDKDPQAIATGQALAAEDGRFVIVQRSFAELGAEVAARGLHGKVSGVLLDLGVSSPQLDDPERGFSFLNDGPLDMRMNPDQGVSAAEFIATAPVEEIARVFKEYGEERFAGRMARAVVERREKQPFTRTADLAEVLKVANPAWEKGKNPATRAFQGLRIHVNNELGDLEAGLEAALDALEVGGRLAVISFHSLEDRIVKLFMRKLVKGEADNLPRNLPVQHKVFEPKIKLIGKAQFASEAELKANPRSRSAVMRVAEKLR.

S-adenosyl-L-methionine contacts are provided by residues G37–H39, D57, F83, D105, and Q112.

This sequence belongs to the methyltransferase superfamily. RsmH family.

The protein localises to the cytoplasm. It catalyses the reaction cytidine(1402) in 16S rRNA + S-adenosyl-L-methionine = N(4)-methylcytidine(1402) in 16S rRNA + S-adenosyl-L-homocysteine + H(+). Functionally, specifically methylates the N4 position of cytidine in position 1402 (C1402) of 16S rRNA. This Pseudomonas putida (strain ATCC 47054 / DSM 6125 / CFBP 8728 / NCIMB 11950 / KT2440) protein is Ribosomal RNA small subunit methyltransferase H.